The following is a 591-amino-acid chain: V-type ATP synthase alpha chain (591 aa).

233 to 240 (GPFGAGKT) contributes to the ATP binding site.

It belongs to the ATPase alpha/beta chains family.

It carries out the reaction ATP + H2O + 4 H(+)(in) = ADP + phosphate + 5 H(+)(out). Functionally, produces ATP from ADP in the presence of a proton gradient across the membrane. The V-type alpha chain is a catalytic subunit. This is V-type ATP synthase alpha chain from Streptococcus pyogenes serotype M2 (strain MGAS10270).